The primary structure comprises 91 residues: Small ribosomal subunit protein uS19 (91 aa).

Belongs to the universal ribosomal protein uS19 family.

In terms of biological role, protein S19 forms a complex with S13 that binds strongly to the 16S ribosomal RNA. The sequence is that of Small ribosomal subunit protein uS19 from Ralstonia pickettii (strain 12J).